Consider the following 485-residue polypeptide: dTDP-4-amino-4,6-dideoxy-D-glucose ammonia-lyase (485 aa).

Positions 141, 145, and 148 each coordinate [4Fe-4S] cluster.

This sequence belongs to the radical SAM superfamily. DesII family. As to quaternary structure, monomer. The cofactor is [4Fe-4S] cluster.

The enzyme catalyses dTDP-4-amino-4,6-dideoxy-alpha-D-glucose + AH2 + S-adenosyl-L-methionine = dTDP-3-dehydro-4,6-dideoxy-alpha-D-glucose + 5'-deoxyadenosine + L-methionine + A + NH4(+) + H(+). Involved in the biosynthesis of dTDP-alpha-D-desosamine, a sugar found in several bacterial macrolide antibiotics. Catalyzes the SAM-dependent deamination of dTDP-4-amino-4,6-deoxyglucose (dTDP-viosamine) to yield dTDP-3-keto-4,6-deoxyglucose. It can also catalyze the oxidative dehydrogenation of the non-physiological substrate dTDP-D-quinovose to dTDP-3-keto-6-deoxy-d-glucose. It can also deaminate dTDP-3-amino-3,6-deoxyglucose. The protein is dTDP-4-amino-4,6-dideoxy-D-glucose ammonia-lyase of Streptomyces venezuelae.